We begin with the raw amino-acid sequence, 372 residues long: MKYDLIIIGSGSVGAAAGYYATRAGLNVLMTDAHMPPHQHGSHHGDTRLIRHAYGEGEKYVPLVLRAQTLWDELSRHNEDDPIFVRSGVINLGPADSAFLANVAHSAEQWQLNVEKLDAQGIMARWPEIRVPDNYIGLFETDSGFLRSELAIKTWIQLAKEAGCAQLFNCPVTAIRHDDDGVTIETVDGEYQAKKAIVCAGTWVKDLLPELPVQPVRKVFAWYQADGRYSVKNKFPAFTGELPNGDQYYGFPAENDALKIGKHNGGQVIHSADERVPFAEVASDGSEAFPFLRNVLPGIGCCLYGAACTYDNSPDEDFIIDTLPGHDNTLLITGLSGHGFKFASVLGEIAADFAQDQKSDFDLTPFRLSRFQ.

Residue 4–34 (DLIIIGSGSVGAAAGYYATRAGLNVLMTDAH) coordinates FAD. S-8alpha-FAD cysteine is present on C308.

The protein belongs to the MSOX/MTOX family. MTOX subfamily. As to quaternary structure, monomer. Requires FAD as cofactor.

The catalysed reaction is N(alpha)-methyl-L-tryptophan + O2 + H2O = L-tryptophan + formaldehyde + H2O2. Catalyzes the oxidative demethylation of N-methyl-L-tryptophan. The sequence is that of N-methyl-L-tryptophan oxidase from Shigella flexneri serotype 5b (strain 8401).